We begin with the raw amino-acid sequence, 1710 residues long: Protein NETWORKED 1B (1710 aa).

One can recognise an NAB domain in the interval 13–92; it reads YSWWWDSHIP…ERYDHTTVEL (80 aa). The segment at 113-159 is disordered; it reads EDSASSSSEPRTEADTEALQKDGTKSKRSFSQMNKLDGTSDSHEADS. Basic and acidic residues-rich tracts occupy residues 122–137 and 150–159; these read PRTEADTEALQKDGTK and GTSDSHEADS. Coiled coils occupy residues 152 to 446, 474 to 546, 579 to 883, 974 to 1021, 1095 to 1259, and 1285 to 1336; these read SDSH…ELGA, QMLR…EIHC, VKKL…IDSL, HQCG…FESL, VSSL…LQEK, and LILE…LSAY. Residues 1409–1448 form a disordered region; that stretch reads RLSRQITRSTSQKRRDRRKIENIQPDDQVTGESRQPRLRP. A coiled-coil region spans residues 1559–1665; that stretch reads RRLSSLRISL…VLKLEDGTKS (107 aa).

Belongs to the NET family. As to expression, expressed in root meristems and at very low levels throughout mature vasculature.

Functionally, plant-specific actin binding protein. May be part of a membrane-cytoskeletal adapter complex. The protein is Protein NETWORKED 1B of Arabidopsis thaliana (Mouse-ear cress).